The following is a 316-amino-acid chain: Transaldolase (316 aa).

The Schiff-base intermediate with substrate role is filled by Lys-127.

The protein belongs to the transaldolase family. Type 2 subfamily.

The protein localises to the cytoplasm. The catalysed reaction is D-sedoheptulose 7-phosphate + D-glyceraldehyde 3-phosphate = D-erythrose 4-phosphate + beta-D-fructose 6-phosphate. It functions in the pathway carbohydrate degradation; pentose phosphate pathway; D-glyceraldehyde 3-phosphate and beta-D-fructose 6-phosphate from D-ribose 5-phosphate and D-xylulose 5-phosphate (non-oxidative stage): step 2/3. In terms of biological role, transaldolase is important for the balance of metabolites in the pentose-phosphate pathway. The chain is Transaldolase (tal) from Helicobacter pylori (strain ATCC 700392 / 26695) (Campylobacter pylori).